The primary structure comprises 260 residues: ATP synthase subunit a (260 aa).

A run of 7 helical transmembrane segments spans residues 30-50 (IAFT…IVFV), 96-116 (LFAF…LVGV), 125-145 (FTVT…VGFA), 151-171 (FFSL…IFPI), 187-207 (LFVA…FVIS), 213-233 (VGTF…ICAL), and 234-254 (ELLV…VYLN).

It belongs to the ATPase A chain family. As to quaternary structure, F-type ATPases have 2 components, CF(1) - the catalytic core - and CF(0) - the membrane proton channel. CF(1) has five subunits: alpha(3), beta(3), gamma(1), delta(1), epsilon(1). CF(0) has three main subunits: a(1), b(2) and c(9-12). The alpha and beta chains form an alternating ring which encloses part of the gamma chain. CF(1) is attached to CF(0) by a central stalk formed by the gamma and epsilon chains, while a peripheral stalk is formed by the delta and b chains.

It localises to the cell inner membrane. Functionally, key component of the proton channel; it plays a direct role in the translocation of protons across the membrane. The chain is ATP synthase subunit a from Novosphingobium aromaticivorans (strain ATCC 700278 / DSM 12444 / CCUG 56034 / CIP 105152 / NBRC 16084 / F199).